A 295-amino-acid polypeptide reads, in one-letter code: UDP-N-acetylenolpyruvoylglucosamine reductase (295 aa).

Residues 24-188 (KVGGNAEIFF…LKAVFKINKG (165 aa)) form the FAD-binding PCMH-type domain. Arginine 168 is an active-site residue. The active-site Proton donor is serine 217. Residue glutamate 287 is part of the active site.

Belongs to the MurB family. Requires FAD as cofactor.

The protein localises to the cytoplasm. The catalysed reaction is UDP-N-acetyl-alpha-D-muramate + NADP(+) = UDP-N-acetyl-3-O-(1-carboxyvinyl)-alpha-D-glucosamine + NADPH + H(+). It participates in cell wall biogenesis; peptidoglycan biosynthesis. Its function is as follows. Cell wall formation. This Rickettsia massiliae (strain Mtu5) protein is UDP-N-acetylenolpyruvoylglucosamine reductase.